A 30-amino-acid polypeptide reads, in one-letter code: Kalata-B14 (30 aa).

A cross-link (cyclopeptide (Gly-Asp)) is located at residues 1-30 (GLPVCGESCFGGTCNTPGCACDPWPVCTRD). Disulfide bonds link cysteine 5–cysteine 19, cysteine 9–cysteine 21, and cysteine 14–cysteine 27.

Post-translationally, this is a cyclic peptide.

In terms of biological role, probably participates in a plant defense mechanism. The protein is Kalata-B14 of Oldenlandia affinis.